The primary structure comprises 1792 residues: MNNNNNNNNNSNNNNNSNNNNNGNSNNNFFSGKGNALSAYQNKILNIKSNNNNAHHFVNKNVPTYSPPNIIMANKKGGNFNNTSGNIINRYNVENNNHRNTYHPSNNNTRNSVNFLNKNILYGNNNNNNNNNNNINITNISNNNNNINITNISNNNNNINITNISNNNKQPISSNQHPYQQKQSHHHNNSINYNEYMDEKNMNTSQSIFKNMTIQRNSQQFNTSDFVNNINIMNAPHINEHSNIYKRNSLNIVNNAHIISNNMNIQSNRNSNISFPQNMNANIGGLKNSNHNLNNIEMKYNTLNNNMNSINKNTNITNVGTLNIQMKNNPMNVNINQNNYNTDFYVNENKVNSKNKENNNNHINIEKMNYIKSNVYLDNTLVQVNSNNNYNMDKNILNNNNNTYIINDKKNSTVNNNITNMDNNLVPGVMSSMNIPDDIKKRKKKERKKNENIYNNRNKSSINTEEHNNNIIDVANQNSEHFLQNNKQYGNITNIQNNNLSHDMNNYSINNSTTSDVIGIVELYKNSLSSKAVNKKKSKLIKDVIDDNKKRNKKEKKKTIPNNDSIINDMNKNKNVELLNETQIFDNKNYDKNNDIHNNIYNSNDNNLIHNKNNVNNDHTNIKEANNNNNRKSEHSEKNKDVHNYYYANNYQCITDEKNNKQYILWNNRTIEVTFVWLFITKEFNENRKKYTAFLPYLKHFYPNRLKDLIEQLEKYSLLKFNYIMHSSYNMQEEYNKNKEPNNINSNDNNNKNDDNNNNNNKNVDGNNNNNNNINSNDKEVLMNGMLLSDKSTLNSNKQIDNTLINNINSGFNNIIKNMSIDDNTIRSIMDNIENITKGKKKGRKKKQTLENNGDNIKEDIKSSKKDKKKDNINDNNNDNNNDNNNDNNNDNNNDNNNDNNNDNNNNNNNNNNNNNNNNNNNHNNHNDNKNNQGDSKNEQEKKKKTRQYRKKSKITNDDNNEKIKQDNINSNNPKNDLKNNEIICSEEKNMKEDNIPDDTHYKEKRRNTFNLFNLDEGTINMDLFNLSLLENDDALNKKENDMVSKSNIPSSFSSPPKETNNKNDIDKEQSDKHNNVQEFQNLNMNNEKSKDLYFNKNDIDNNDNKDKIINETSSGTFMQNLKETFYEKTKAMFSNLLSDTKISKDDELNNEVDQNCVKTSSGILNKEENNKKEDDEKHFDDNTNEQKKNVDNGEYNEMTAEPGRKKRKKDVLERKKKNLNKEIIKSEKRIRKYRTKKMLLKEAMEKGISNNIVESNITANNNNDNNKNNDNDNNNNNNDNIINNNNNNGDMFSNSYDNSYIKENKYNKKLCFPQNNLLSDFRSEPIIIQQDKRKIIKINTINKIKRKYKKFRFCINKVFKKKSINDIIALNENIHKNKDLLTLFKKKDLANLKKKNLSFFMDTLKLEKIDMLIMKRIQMCLEKIKNTLLLTCTINNVQEIVNILKKAFEKRLYLMWPLIEFSNKYRLDQYFHLLGKNKNHINSSFKDTKLFVHQNISSLILYFNQRSMDDKWVEYLKSQMKPKRRRRKTKMKEQFLEDKPIDYLNTMNSQHSNNFIGENFSEIETVESKANEYAFVGYNQKRLLTQITPYDYRVVLNSNFCNKFFTPNWREQQSIFIDNLHFDMVPDTDEIKKHFENVYIRYMEYDEEKLRSKSDTKSKEHKKKDKKYKMLFKKKEGKGKPGRKKKIKLEIENVSNEIKIKKPRKKYERVKPRKSKNAMMNEEKSGNSEKQINNVLNVTNIENKHKSKKGRKPKESNLNNLNINEDINVAKASPDTLHRASLEFMNPNLFT.

The segment covering 1 to 28 (MNNNNNNNNNSNNNNNSNNNNNGNSNNN) has biased composition (low complexity). Disordered regions lie at residues 1-34 (MNNNNNNNNNSNNNNNSNNNNNGNSNNNFFSGKG), 162-187 (TNISNNNKQPISSNQHPYQQKQSHHH), 440-461 (KKRKKKERKKNENIYNNRNKSS), 544-568 (VIDDNKKRNKKEKKKTIPNNDSIIN), 736-777 (NKNK…INSN), 837-979 (TKGK…NDLK), 1044-1071 (VSKSNIPSSFSSPPKETNNKNDIDKEQS), 1084-1106 (NMNNEKSKDLYFNKNDIDNNDNK), 1160-1215 (TSSG…VLER), 1257-1290 (NITANNNNDNNKNNDNDNNNNNNDNIINNNNNNG), 1651-1686 (LRSKSDTKSKEHKKKDKKYKMLFKKKEGKGKPGRKK), 1704-1731 (PRKKYERVKPRKSKNAMMNEEKSGNSEK), and 1742-1761 (IENKHKSKKGRKPKESNLNN). Over residues 169-182 (KQPISSNQHPYQQK) the composition is skewed to polar residues. The segment covering 550–559 (KRNKKEKKKT) has biased composition (basic residues). Residues 741–776 (PNNINSNDNNNKNDDNNNNNNKNVDGNNNNNNNINS) are compositionally biased toward low complexity. Positions 838 to 847 (KGKKKGRKKK) are enriched in basic residues. The span at 856-873 (NIKEDIKSSKKDKKKDNI) shows a compositional bias: basic and acidic residues. The span at 874-924 (NDNNNDNNNDNNNDNNNDNNNDNNNDNNNDNNNNNNNNNNNNNNNNNNNHN) shows a compositional bias: low complexity. Basic residues predominate over residues 943-954 (KKKTRQYRKKSK). A compositionally biased stretch (basic and acidic residues) spans 955–966 (ITNDDNNEKIKQ). Over residues 1045–1057 (SKSNIPSSFSSPP) the composition is skewed to low complexity. Basic and acidic residues-rich tracts occupy residues 1060-1071 (TNNKNDIDKEQS), 1088-1106 (EKSKDLYFNKNDIDNNDNK), and 1166-1192 (NKEENNKKEDDEKHFDDNTNEQKKNVD). Positions 1205–1215 (RKKRKKDVLER) are enriched in basic residues. The span at 1261-1289 (NNNNDNNKNNDNDNNNNNNDNIINNNNNN) shows a compositional bias: low complexity. Basic residues-rich tracts occupy residues 1660 to 1686 (KEHKKKDKKYKMLFKKKEGKGKPGRKK) and 1704 to 1717 (PRKKYERVKPRKSK).

This is an uncharacterized protein from Plasmodium falciparum (isolate 3D7).